A 1041-amino-acid polypeptide reads, in one-letter code: RAS protein activator like-3 (1041 aa).

The segment at 1-59 (MKPECGQTMFRTFWSRSRDSSAMDPPLQSEEDSQTQPSLPSPLTSYRWHTGGSGEKAAG) is disordered. Polar residues predominate over residues 34–44 (QTQPSLPSPLT). Phosphoserine is present on residues S41, S74, S187, S189, S190, S193, S239, S252, S256, and S259. Positions 218–243 (SNQVHNVRKLLKRLKEKKRAKSELGA) form a coiled coil. One can recognise a PH domain in the interval 220–321 (QVHNVRKLLK…WIEDLRRQFQ (102 aa)). The segment at 234 to 256 (KKRAKSELGAYTPRDGPPSALGS) is disordered. Residue T262 is modified to Phosphothreonine. The 119-residue stretch at 312 to 430 (WIEDLRRQFQ…APAAGLERWF (119 aa)) folds into the C2 domain. In terms of domain architecture, Ras-GAP spans 500–708 (GRAQALVTDL…PAMQHFLDQV (209 aa)). The tract at residues 790–910 (GEKPGFLAPR…PGDRYQTTGT (121 aa)) is disordered. Residues S813 and S816 each carry the phosphoserine modification. The segment covering 850–866 (RPTHRRPSAGSKPRPKG) has biased composition (basic residues). A coiled-coil region spans residues 931–1013 (QKALSLLVES…LRDSLQSLQL (83 aa)). Residues 1016–1041 (KTPGSRSQPLPLKAPCVNGADLSMGT) form a disordered region.

As to expression, predominantly expressed in hematopoietic tissues.

The protein localises to the cytoplasm. Its subcellular location is the cell cortex. Functions as a Ras GTPase-activating protein. Plays an important role in the expansion and functions of natural killer T (NKT) cells in the liver by negatively regulating RAS activity and the down-stream ERK signaling pathway. This is RAS protein activator like-3 (Rasal3) from Mus musculus (Mouse).